The primary structure comprises 220 residues: Superoxide dismutase [Fe] (220 aa).

Fe cation-binding residues include His26, His73, Asp164, and His168.

Belongs to the iron/manganese superoxide dismutase family. As to quaternary structure, homodimer. It depends on Fe cation as a cofactor.

It carries out the reaction 2 superoxide + 2 H(+) = H2O2 + O2. Destroys superoxide anion radicals which are normally produced within the cells and which are toxic to biological systems. The protein is Superoxide dismutase [Fe] (sodB) of Campylobacter jejuni subsp. jejuni serotype O:2 (strain ATCC 700819 / NCTC 11168).